Reading from the N-terminus, the 477-residue chain is Phosphatidylinositol 4-kinase type 2-beta (477 aa).

The interval M1–S80 is disordered. Phosphoserine is present on S45. One can recognise a PI3K/PI4K catalytic domain in the interval G116 to C447. A G-loop region spans residues I122–G128. Positions 129 and 144 each coordinate ATP. The interval E149–Y151 is important for substrate binding. Residues K157–C170 are important for interaction with membranes. Residues Q253–V256 and R267–R268 each bind ATP. Residues K260–R268 form an important for interaction with membranes region. The segment at R297–N305 is catalytic loop. The activation loop stretch occupies residues A338–F358. D340 lines the ATP pocket. The important for interaction with membranes stretch occupies residues W353–W362.

This sequence belongs to the PI3/PI4-kinase family. Type II PI4K subfamily.

It is found in the cytoplasm. The protein resides in the cytosol. Its subcellular location is the golgi apparatus membrane. The protein localises to the endoplasmic reticulum membrane. It localises to the cell membrane. It is found in the early endosome membrane. It catalyses the reaction a 1,2-diacyl-sn-glycero-3-phospho-(1D-myo-inositol) + ATP = a 1,2-diacyl-sn-glycero-3-phospho-(1D-myo-inositol 4-phosphate) + ADP + H(+). Together with PI4K2A and the type III PI4Ks (PIK4CA and PIK4CB) it contributes to the overall PI4-kinase activity of the cell. This contribution may be especially significant in plasma membrane, endosomal and Golgi compartments. The phosphorylation of phosphatidylinositol (PI) to PI4P is the first committed step in the generation of phosphatidylinositol 4,5-bisphosphate (PIP2), a precursor of the second messenger inositol 1,4,5-trisphosphate (InsP3). Contributes to the production of InsP3 in stimulated cells and is likely to be involved in the regulation of vesicular trafficking. This Rattus norvegicus (Rat) protein is Phosphatidylinositol 4-kinase type 2-beta (Pi4k2b).